Reading from the N-terminus, the 121-residue chain is UPF0102 protein BT_2236 (121 aa).

Belongs to the UPF0102 family.

This chain is UPF0102 protein BT_2236, found in Bacteroides thetaiotaomicron (strain ATCC 29148 / DSM 2079 / JCM 5827 / CCUG 10774 / NCTC 10582 / VPI-5482 / E50).